The chain runs to 517 residues: Zinc finger protein AEBP2 (517 aa).

A disordered region spans residues 1-229; the sequence is MAAAITDMAD…DSEDSISSTI (229 aa). Alanine 2 is modified (N-acetylalanine). Phosphoserine is present on residues serine 18 and serine 24. Residues 36 to 51 show a composition bias toward acidic residues; that stretch reads PEEEEEEEEEEEEAEA. Positions 61–78 are enriched in gly residues; sequence GGSGGGGGGGGGGVGGGE. The span at 94 to 121 shows a compositional bias: acidic residues; that stretch reads GEDEDEEEDDEEEEDESSSSGGGEEESS. A compositionally biased stretch (low complexity) spans 122–150; the sequence is AESLVGSSGGSSSDETRSLSPGAASSSSG. Phosphoserine is present on serine 141. Residues 152 to 163 show a composition bias toward basic and acidic residues; it reads GDGKEGLEEPKG. 2 stretches are compositionally biased toward gly residues: residues 166–175 and 185–196; these read GSQGGGGGGS and GDEGYGTGGGGS. 3 positions are modified to phosphoserine: serine 206, serine 210, and serine 211. An interaction with RBBP4 region spans residues 209–294; that stretch reads MSSDGEPLSR…IHVDGQRGGV (86 aa). The C2H2-type 1 zinc-finger motif lies at 261 to 286; sequence YNCCWDQCQACFNSSPDLADHIRSIH. The C2H2-type 2; degenerate zinc-finger motif lies at 300–322; sequence KGCKVYNTPSTSQSWLQRHMLTH. A C2H2-type 3 zinc finger spans residues 328–352; the sequence is FKCVVGGCNASFASQGGLARHVPTH. Residues 352–365 show a composition bias toward polar residues; that stretch reads HFSQQNSSKVSSQP. The disordered stretch occupies residues 352–394; it reads HFSQQNSSKVSSQPKAKEESPSKAGMNKRRKLKNKRRRSLPRP. A compositionally biased stretch (basic residues) spans 377-392; that stretch reads MNKRRKLKNKRRRSLP. A Phosphoserine modification is found at serine 390. The interval 407–478 is interaction with SUZ12; it reads RHRAICFNLS…QLKTKVVHLS (72 aa). Positions 495–517 are important for nucleosome binding activity of the PRC2 complex; sequence TMPQKRLKRTLIRKVFNLYLSKQ.

Belongs to the AEBP2/jing C2H2-type zinc-finger family. Self-associates. Associates with the PRC2 complex, which consists of the core components EED, EZH1 or EZH2, SUZ12, and RBBP4, and various combinations of accessory subunits including AEBP2, JARID2, PHF19, MTF2 and EPOP. Found in a monomeric PRC2.2 (class 2) complex consisting of at least SUZ12, RBBP4, AEBP2 and JARID2. Within the PRC2 complex, interacts directly with SUZ12; competes with PHF19 for SUZ12 binding. Interacts with EED, EZH2, and RBBP4. May also interact with RBBP7.

Its subcellular location is the nucleus. In terms of biological role, acts as an accessory subunit for the core Polycomb repressive complex 2 (PRC2), which mediates histone H3K27 (H3K27me3) trimethylation on chromatin leading to transcriptional repression of the affected target gene. Plays a role in nucleosome localization of the PRC2 complex. This is Zinc finger protein AEBP2 (AEBP2) from Homo sapiens (Human).